Consider the following 588-residue polypeptide: Sulfite reductase [NADPH] hemoprotein beta-component (588 aa).

Residues cysteine 442, cysteine 448, cysteine 487, and cysteine 491 each coordinate [4Fe-4S] cluster. Cysteine 491 is a siroheme binding site.

Belongs to the nitrite and sulfite reductase 4Fe-4S domain family. In terms of assembly, alpha(8)-beta(8). The alpha component is a flavoprotein, the beta component is a hemoprotein. It depends on siroheme as a cofactor. Requires [4Fe-4S] cluster as cofactor.

The enzyme catalyses hydrogen sulfide + 3 NADP(+) + 3 H2O = sulfite + 3 NADPH + 4 H(+). It participates in sulfur metabolism; hydrogen sulfide biosynthesis; hydrogen sulfide from sulfite (NADPH route): step 1/1. In terms of biological role, component of the sulfite reductase complex that catalyzes the 6-electron reduction of sulfite to sulfide. This is one of several activities required for the biosynthesis of L-cysteine from sulfate. The polypeptide is Sulfite reductase [NADPH] hemoprotein beta-component (Actinobacillus pleuropneumoniae serotype 3 (strain JL03)).